The following is a 258-amino-acid chain: Phosphate import ATP-binding protein PstB 2 (258 aa).

The ABC transporter domain maps to 12-253 (IQVRDLNFYY…PRQKQTEDYI (242 aa)). Position 44 to 51 (44 to 51 (GPSGCGKS)) interacts with ATP.

It belongs to the ABC transporter superfamily. Phosphate importer (TC 3.A.1.7) family. The complex is composed of two ATP-binding proteins (PstB), two transmembrane proteins (PstC and PstA) and a solute-binding protein (PstS).

Its subcellular location is the cell inner membrane. It carries out the reaction phosphate(out) + ATP + H2O = ADP + 2 phosphate(in) + H(+). Functionally, part of the ABC transporter complex PstSACB involved in phosphate import. Responsible for energy coupling to the transport system. The chain is Phosphate import ATP-binding protein PstB 2 from Pectobacterium atrosepticum (strain SCRI 1043 / ATCC BAA-672) (Erwinia carotovora subsp. atroseptica).